Here is a 314-residue protein sequence, read N- to C-terminus: 4-hydroxy-3-methylbut-2-enyl diphosphate reductase (314 aa).

A [4Fe-4S] cluster-binding site is contributed by Cys12. Residues His41 and His74 each coordinate (2E)-4-hydroxy-3-methylbut-2-enyl diphosphate. The dimethylallyl diphosphate site is built by His41 and His74. Isopentenyl diphosphate is bound by residues His41 and His74. Cys96 is a binding site for [4Fe-4S] cluster. His124 lines the (2E)-4-hydroxy-3-methylbut-2-enyl diphosphate pocket. His124 contacts dimethylallyl diphosphate. His124 is a binding site for isopentenyl diphosphate. Glu126 functions as the Proton donor in the catalytic mechanism. Thr168 is a binding site for (2E)-4-hydroxy-3-methylbut-2-enyl diphosphate. Cys198 provides a ligand contact to [4Fe-4S] cluster. Positions 226, 227, 228, and 270 each coordinate (2E)-4-hydroxy-3-methylbut-2-enyl diphosphate. The dimethylallyl diphosphate site is built by Ser226, Ser227, Asn228, and Ser270. Ser226, Ser227, Asn228, and Ser270 together coordinate isopentenyl diphosphate.

The protein belongs to the IspH family. It depends on [4Fe-4S] cluster as a cofactor.

It carries out the reaction isopentenyl diphosphate + 2 oxidized [2Fe-2S]-[ferredoxin] + H2O = (2E)-4-hydroxy-3-methylbut-2-enyl diphosphate + 2 reduced [2Fe-2S]-[ferredoxin] + 2 H(+). The catalysed reaction is dimethylallyl diphosphate + 2 oxidized [2Fe-2S]-[ferredoxin] + H2O = (2E)-4-hydroxy-3-methylbut-2-enyl diphosphate + 2 reduced [2Fe-2S]-[ferredoxin] + 2 H(+). It functions in the pathway isoprenoid biosynthesis; dimethylallyl diphosphate biosynthesis; dimethylallyl diphosphate from (2E)-4-hydroxy-3-methylbutenyl diphosphate: step 1/1. The protein operates within isoprenoid biosynthesis; isopentenyl diphosphate biosynthesis via DXP pathway; isopentenyl diphosphate from 1-deoxy-D-xylulose 5-phosphate: step 6/6. Functionally, catalyzes the conversion of 1-hydroxy-2-methyl-2-(E)-butenyl 4-diphosphate (HMBPP) into a mixture of isopentenyl diphosphate (IPP) and dimethylallyl diphosphate (DMAPP). Acts in the terminal step of the DOXP/MEP pathway for isoprenoid precursor biosynthesis. The sequence is that of 4-hydroxy-3-methylbut-2-enyl diphosphate reductase from Pseudomonas aeruginosa (strain LESB58).